The sequence spans 334 residues: Antho-RFamide neuropeptides (334 aa).

A signal peptide spans 1-26 (MLVAMTTASYVTILVTLLFHILTINA). The propeptide occupies 27–116 (KTVTKRAKET…REFQGRFGRE (90 aa)). 2 stretches are compositionally biased toward basic and acidic residues: residues 115–289 (REQG…RELL) and 303–334 (PQTR…ANKS). Residues 115 to 334 (REQGRFGREE…ESNDEEANKS (220 aa)) are disordered. Phenylalanine 120 bears the Phenylalanine amide mark. Positions 122-125 (REED) are excised as a propeptide. Phenylalanine 129 bears the Phenylalanine amide mark. A propeptide spanning residues 131–134 (REED) is cleaved from the precursor. Phenylalanine 138 carries the phenylalanine amide modification. A propeptide spanning residues 140–142 (REE) is cleaved from the precursor. The residue at position 146 (phenylalanine 146) is a Phenylalanine amide. Positions 148-151 (REED) are excised as a propeptide. At phenylalanine 155 the chain carries Phenylalanine amide. Residues 157 to 160 (REED) constitute a propeptide that is removed on maturation. Residue phenylalanine 164 is modified to Phenylalanine amide. A propeptide spanning residues 166–169 (REED) is cleaved from the precursor. A Phenylalanine amide modification is found at phenylalanine 173. A propeptide spanning residues 175–178 (REEE) is cleaved from the precursor. The residue at position 182 (phenylalanine 182) is a Phenylalanine amide. Residues 184-187 (REED) constitute a propeptide that is removed on maturation. The residue at position 191 (phenylalanine 191) is a Phenylalanine amide. A propeptide spanning residues 193 to 196 (REEE) is cleaved from the precursor. The residue at position 200 (phenylalanine 200) is a Phenylalanine amide. The propeptide occupies 202–205 (REED). Phenylalanine amide is present on phenylalanine 209. Residues 211-214 (REED) constitute a propeptide that is removed on maturation. The residue at position 218 (phenylalanine 218) is a Phenylalanine amide. Positions 220 to 223 (REEE) are excised as a propeptide. Phenylalanine 227 carries the phenylalanine amide modification. Residues 229-233 (KRDED) constitute a propeptide that is removed on maturation. At phenylalanine 237 the chain carries Phenylalanine amide. A propeptide spanning residues 239 to 242 (KRED) is cleaved from the precursor. Phenylalanine 246 is subject to Phenylalanine amide. Positions 248 to 252 (KRDED) are excised as a propeptide. Residue phenylalanine 256 is modified to Phenylalanine amide. A propeptide spanning residues 258–262 (KRDED) is cleaved from the precursor. Phenylalanine 266 bears the Phenylalanine amide mark. Positions 268–271 (KRED) are excised as a propeptide. At phenylalanine 275 the chain carries Phenylalanine amide. Residues 277–280 (KRED) constitute a propeptide that is removed on maturation. Phenylalanine 284 bears the Phenylalanine amide mark. A propeptide spanning residues 286 to 334 (RELLAKLNKRTTSIQEDPQTRFRDVQMTRRNVAKKDKIEESNDEEANKS) is cleaved from the precursor.

This sequence belongs to the FARP (FMRFamide related peptide) family. Neurons associated with smooth muscle fibers.

It is found in the secreted. Its function is as follows. Not known but it could act as a transmitter at neuromuscular synapses. In Calliactis parasitica (Sea anemone), this protein is Antho-RFamide neuropeptides.